The following is a 303-amino-acid chain: Caspase-7 (303 aa).

Met-1 bears the N-acetylmethionine mark. A propeptide spanning residues 1–23 is cleaved from the precursor; that stretch reads MTDDQDCAAELEKVDSSSEDGVD. The disordered stretch occupies residues 1-26; sequence MTDDQDCAAELEKVDSSSEDGVDAKP. The span at 10 to 26 shows a compositional bias: basic and acidic residues; the sequence is ELEKVDSSSEDGVDAKP. Ser-30 is modified (phosphoserine). The segment at 38-41 is exosite; it reads KKKR. The tract at residues 76-87 is loop L1; that stretch reads KNFDKATGMDVR. Residue His-144 is part of the active site. The residue at position 173 (Thr-173) is a Phosphothreonine. The active site involves Cys-186. Residues 187-196 form a loop L2 region; the sequence is RGTELDDGIQ. The propeptide occupies 199–206; it reads SGPINDID. Residues 226-238 are loop L3; the sequence is VPGYYSWRNPGKG. At Ser-239 the chain carries Phosphoserine. Positions 274-288 are loop L4; sequence ESQSDDPRFNEKKQI.

The protein belongs to the peptidase C14A family. As to quaternary structure, heterotetramer that consists of two anti-parallel arranged heterodimers, each one formed by a 20 kDa (p20) and a 11 kDa (p11) subunit. Interacts with XIAP (via its second BIR domain); inhibiting CASP7 activity. Interacts with BIRC6/bruce. Interacts with ATXN3 (short isoform 1). Interacts with HSPA5. In terms of processing, cleavage by different proteases, such as granzyme B (GZMB), caspase-1 (CASP1), caspase-8 (CASP8) or caspase-9 (CASP9) generate the two active subunits. Its involvement in different programmed cell death processes is probably specified by the protease that activates CASP7. Cleaved and activated by initiator caspases (CASP8 and/or CASP9), leading to execution phase of apoptosis. Cleavage and maturation by GZMB regulates granzyme-mediated programmed cell death. Cleaved and activated by CASP1 in response to bacterial infection. Propeptide domains can also be cleaved efficiently by CASP3. Active heterodimers between the small subunit of caspase-7 and the large subunit of CASP3, and vice versa, also occur. Also cleaved at the N-terminus at alternative sites by CAPN1, leading to its activation. Post-translationally, phosphorylation at Ser-30 and Ser-239 by PAK2 inhibits its activity. Phosphorylation at Ser-30 prevents cleavage and activation by initiator caspase CASP9, while phosphorylation at Ser-239 prevents thiol protease activity by preventing substrate-binding. Ubiquitinated by BIRC6; this activity is inhibited by DIABLO/SMAC. In terms of tissue distribution, highly expressed in heart, lung, liver and kidney. Low levels in spleen, skeletal muscle and testis. No expression in the brain.

The protein localises to the cytoplasm. It localises to the cytosol. It is found in the nucleus. The protein resides in the secreted. Its subcellular location is the extracellular space. The catalysed reaction is Strict requirement for an Asp residue at position P1 and has a preferred cleavage sequence of Asp-Glu-Val-Asp-|-.. With respect to regulation, during activation, the N-terminal disordered prodomain is removed by cleavage. Concomitantly, double cleavage gives rise to a large Caspase-7 subunit p20 and a small Caspase-7 subunit p11. The two large and two small subunits then assemble to form the active CASP7 complex. Can be cleaved and activated by different caspases, depending on the context. Cleaved and activated by initiator caspases (CASP8 and/or CASP9), leading to execution phase of apoptosis. Cleavage and maturation by GZMB regulates granzyme-mediated programmed cell death. Cleavage and maturation by CASP1 regulates pyroptosis. Inhibited by XIAP, which directly binds to the active site pocket and obstructs substrate entry. Phosphorylation at Ser-30 and Ser-239 by PAK2 inhibits its activity. Inhibited by BIRC6; following inhibition of BIRC6-caspase binding by DIABLO/SMAC, BIRC6 is subjected to caspase cleavage, leading to an increase in active caspases. Thiol protease involved in different programmed cell death processes, such as apoptosis, pyroptosis or granzyme-mediated programmed cell death, by proteolytically cleaving target proteins. Has a marked preference for Asp-Glu-Val-Asp (DEVD) consensus sequences, with some plasticity for alternate non-canonical sequences. Its involvement in the different programmed cell death processes is probably determined by upstream proteases that activate CASP7. Acts as an effector caspase involved in the execution phase of apoptosis: following cleavage and activation by initiator caspases (CASP8 and/or CASP9), mediates execution of apoptosis by catalyzing cleavage of proteins, such as CLSPN, PARP1, PTGES3 and YY1. Compared to CASP3, acts as a minor executioner caspase and cleaves a limited set of target proteins. Acts as a key regulator of the inflammatory response in response to bacterial infection by catalyzing cleavage and activation of the sphingomyelin phosphodiesterase SMPD1 in the extracellular milieu, thereby promoting membrane repair. Regulates pyroptosis in intestinal epithelial cells: cleaved and activated by CASP1 in response to S.typhimurium infection, promoting its secretion to the extracellular milieu, where it catalyzes activation of SMPD1, generating ceramides that repair membranes and counteract the action of gasdermin-D (GSDMD) pores. Regulates granzyme-mediated programmed cell death in hepatocytes: cleaved and activated by granzyme B (GZMB) in response to bacterial infection, promoting its secretion to the extracellular milieu, where it catalyzes activation of SMPD1, generating ceramides that repair membranes and counteract the action of perforin (PRF1) pores. Following cleavage by CASP1 in response to inflammasome activation, catalyzes processing and inactivation of PARP1, alleviating the transcription repressor activity of PARP1. Acts as an inhibitor of type I interferon production during virus-induced apoptosis by mediating cleavage of antiviral proteins CGAS, IRF3 and MAVS, thereby preventing cytokine overproduction. Cleaves and activates sterol regulatory element binding proteins (SREBPs). Cleaves phospholipid scramblase proteins XKR4, XKR8 and XKR9. Cleaves BIRC6 following inhibition of BIRC6-caspase binding by DIABLO/SMAC. The polypeptide is Caspase-7 (Mus musculus (Mouse)).